Consider the following 340-residue polypeptide: 4-dimethylallyltryptophan N-methyltransferase easF (340 aa).

It belongs to the methyltransferase superfamily. As to quaternary structure, homodimer.

The catalysed reaction is 4-(3-methylbut-2-enyl)-L-tryptophan + S-adenosyl-L-methionine = 4-(3-methylbut-2-enyl)-L-abrine + S-adenosyl-L-homocysteine + H(+). Its pathway is alkaloid biosynthesis; ergot alkaloid biosynthesis. In terms of biological role, 4-dimethylallyltryptophan N-methyltransferase; part of the gene cluster that mediates the biosynthesis of fungal ergot alkaloid. DmaW catalyzes the first step of ergot alkaloid biosynthesis by condensing dimethylallyl diphosphate (DMAP) and tryptophan to form 4-dimethylallyl-L-tryptophan. The second step is catalyzed by the methyltransferase easF that methylates 4-dimethylallyl-L-tryptophan in the presence of S-adenosyl-L-methionine, resulting in the formation of 4-dimethylallyl-L-abrine. The catalase easC and the FAD-dependent oxidoreductase easE then transform 4-dimethylallyl-L-abrine to chanoclavine-I which is further oxidized by easD in the presence of NAD(+), resulting in the formation of chanoclavine-I aldehyde. Chanoclavine-I aldehyde is the precursor of ergoamides and ergopeptines in Clavicipitaceae, and clavine-type alcaloids such as fumiclavine in Trichocomaceae. However, the metabolites downstream of chanoclavine-I aldehyde in Arthrodermataceae have not been identified yet. In Arthroderma benhamiae (strain ATCC MYA-4681 / CBS 112371) (Trichophyton mentagrophytes), this protein is 4-dimethylallyltryptophan N-methyltransferase easF.